The sequence spans 32 residues: uncharacterized protein (32 aa).

Residues 3 to 23 form a helical membrane-spanning segment; sequence IGIIFPVVIFITAVVFLAWFF.

It is found in the cell inner membrane. This is an uncharacterized protein from Escherichia coli (strain K12).